A 33-amino-acid chain; its full sequence is Tail virion protein G9P (33 aa).

Residues 5–25 traverse the membrane as a helical segment; it reads VGSFLGAYFLGFALFYGIGFF.

It belongs to the inovirus G9P protein family.

Its subcellular location is the virion. It localises to the host membrane. Its function is as follows. May initiate with G7P the virion concomitant assembly-budding process, by interacting with the packaging signal of the viral genome. The assembly-budding takes place at the host inner membrane. In turn, G7P and G9P are present at the end of the filamentous virion that emerges first from the bacterial host. The polypeptide is Tail virion protein G9P (IX) (Salmonella phage IKe (Bacteriophage IKe)).